A 462-amino-acid chain; its full sequence is Bifunctional protein HldE (462 aa).

Residues M1 to P309 are ribokinase. N186 to E189 contacts ATP. The active site involves D254. Residues F336–C462 are cytidylyltransferase.

In the N-terminal section; belongs to the carbohydrate kinase PfkB family. The protein in the C-terminal section; belongs to the cytidylyltransferase family. Homodimer.

The catalysed reaction is D-glycero-beta-D-manno-heptose 7-phosphate + ATP = D-glycero-beta-D-manno-heptose 1,7-bisphosphate + ADP + H(+). The enzyme catalyses D-glycero-beta-D-manno-heptose 1-phosphate + ATP + H(+) = ADP-D-glycero-beta-D-manno-heptose + diphosphate. It functions in the pathway nucleotide-sugar biosynthesis; ADP-L-glycero-beta-D-manno-heptose biosynthesis; ADP-L-glycero-beta-D-manno-heptose from D-glycero-beta-D-manno-heptose 7-phosphate: step 1/4. Its pathway is nucleotide-sugar biosynthesis; ADP-L-glycero-beta-D-manno-heptose biosynthesis; ADP-L-glycero-beta-D-manno-heptose from D-glycero-beta-D-manno-heptose 7-phosphate: step 3/4. Its function is as follows. Catalyzes the phosphorylation of D-glycero-D-manno-heptose 7-phosphate at the C-1 position to selectively form D-glycero-beta-D-manno-heptose-1,7-bisphosphate. Functionally, catalyzes the ADP transfer from ATP to D-glycero-beta-D-manno-heptose 1-phosphate, yielding ADP-D-glycero-beta-D-manno-heptose. In Nitratiruptor sp. (strain SB155-2), this protein is Bifunctional protein HldE.